We begin with the raw amino-acid sequence, 261 residues long: Indole-3-glycerol phosphate synthase (261 aa).

Belongs to the TrpC family.

It catalyses the reaction 1-(2-carboxyphenylamino)-1-deoxy-D-ribulose 5-phosphate + H(+) = (1S,2R)-1-C-(indol-3-yl)glycerol 3-phosphate + CO2 + H2O. It functions in the pathway amino-acid biosynthesis; L-tryptophan biosynthesis; L-tryptophan from chorismate: step 4/5. The sequence is that of Indole-3-glycerol phosphate synthase from Paraburkholderia phymatum (strain DSM 17167 / CIP 108236 / LMG 21445 / STM815) (Burkholderia phymatum).